We begin with the raw amino-acid sequence, 61 residues long: Small ribosomal subunit protein uS14 (61 aa).

Cys24, Cys27, Cys40, and Cys43 together coordinate Zn(2+).

This sequence belongs to the universal ribosomal protein uS14 family. Zinc-binding uS14 subfamily. As to quaternary structure, part of the 30S ribosomal subunit. Contacts proteins S3 and S10. Requires Zn(2+) as cofactor.

In terms of biological role, binds 16S rRNA, required for the assembly of 30S particles and may also be responsible for determining the conformation of the 16S rRNA at the A site. This chain is Small ribosomal subunit protein uS14, found in Staphylococcus aureus (strain USA300 / TCH1516).